The chain runs to 295 residues: Cytidine deaminase (295 aa).

CMP/dCMP-type deaminase domains follow at residues 48-168 and 187-295; these read TDNQ…FGPS and EDDD…YLSL. 89–91 contacts substrate; the sequence is NME. Zn(2+) is bound at residue histidine 102. Residue glutamate 104 is the Proton donor of the active site. Zn(2+) contacts are provided by cysteine 129 and cysteine 132.

It belongs to the cytidine and deoxycytidylate deaminase family. In terms of assembly, homodimer. Zn(2+) serves as cofactor.

The catalysed reaction is cytidine + H2O + H(+) = uridine + NH4(+). It carries out the reaction 2'-deoxycytidine + H2O + H(+) = 2'-deoxyuridine + NH4(+). This enzyme scavenges exogenous and endogenous cytidine and 2'-deoxycytidine for UMP synthesis. The chain is Cytidine deaminase from Vibrio vulnificus (strain CMCP6).